The following is a 415-amino-acid chain: Arrestin red cell isoform 3 (415 aa).

Belongs to the arrestin family.

The protein resides in the cytoplasm. In Oncorhynchus mykiss (Rainbow trout), this protein is Arrestin red cell isoform 3.